Reading from the N-terminus, the 394-residue chain is MNKQSVRDVELQGKKVFCRVDFNVPMKDGVVTDDTRIRAALPTIQLLAEKGARIILASHLGRPKGEVVEELRLDPVAARLQELLGKPVAKVNVAHGPEAEQAANELKDGDVLLLENVRFYPGEEKNDPELAKAFASLADVYVNDAFGAAHRAHASTEGIAHHVTAVAGLLMEKELEVLGKALSNPERPFTAIIGGAKVKDKIGVIENLLDKVDNLIIGGGLAYTFIKAQGHEIGKSLLEADKMDLALSFMEKAKEKGVNFYVPQDAIVADDFSNDANTKAVDIDQIPADWEALDIGPKTRETYRNVIQSSKLVIWNGPMGVFELDAFAGGTKAVAEALADANDTYSVIGGGDSAAAVEKFGLANQMSHISTGGGASLEFMEGKALPGVVALNDK.

Substrate is bound by residues 21-23 (DFN), Arg36, 59-62 (HLGR), Arg118, and Arg151. Phosphoserine is present on Ser183. Lys201 contacts ATP. Phosphothreonine is present on Thr299. Residues Glu323 and 350 to 353 (GGDS) each bind ATP.

This sequence belongs to the phosphoglycerate kinase family. As to quaternary structure, monomer.

The protein localises to the cytoplasm. It catalyses the reaction (2R)-3-phosphoglycerate + ATP = (2R)-3-phospho-glyceroyl phosphate + ADP. The protein operates within carbohydrate degradation; glycolysis; pyruvate from D-glyceraldehyde 3-phosphate: step 2/5. The protein is Phosphoglycerate kinase of Halalkalibacterium halodurans (strain ATCC BAA-125 / DSM 18197 / FERM 7344 / JCM 9153 / C-125) (Bacillus halodurans).